The sequence spans 1061 residues: Eukaryotic translation initiation factor 3 subunit A (1061 aa).

A compositionally biased stretch (polar residues) spans 114–126 (QSSIEATTGSSSV). Positions 114–133 (QSSIEATTGSSSVEDLEASE) are disordered. One can recognise a PCI domain in the interval 339–523 (LQKAATFVVL…GVLSFDVDVF (185 aa)). Coiled coils occupy residues 609-724 (EVIQ…KRLD) and 789-906 (RADL…AAAA). Residues 828–901 (REKREREEKE…EAMARRRAEK (74 aa)) show a composition bias toward basic and acidic residues. A disordered region spans residues 828-1061 (REKREREEKE…KYVPKFRREG (234 aa)). Pro residues-rich tracts occupy residues 950 to 962 (SGPPPARAAPPPI) and 1000 to 1011 (APPPERSGPPPR).

Belongs to the eIF-3 subunit A family. In terms of assembly, component of the eukaryotic translation initiation factor 3 (eIF-3) complex.

The protein localises to the cytoplasm. In terms of biological role, RNA-binding component of the eukaryotic translation initiation factor 3 (eIF-3) complex, which is involved in protein synthesis of a specialized repertoire of mRNAs and, together with other initiation factors, stimulates binding of mRNA and methionyl-tRNAi to the 40S ribosome. The eIF-3 complex specifically targets and initiates translation of a subset of mRNAs involved in cell proliferation. The chain is Eukaryotic translation initiation factor 3 subunit A from Chaetomium globosum (strain ATCC 6205 / CBS 148.51 / DSM 1962 / NBRC 6347 / NRRL 1970) (Soil fungus).